The sequence spans 318 residues: Pantothenate kinase (318 aa).

96 to 103 contributes to the ATP binding site; sequence GSVAVGKS.

This sequence belongs to the prokaryotic pantothenate kinase family.

The protein localises to the cytoplasm. The enzyme catalyses (R)-pantothenate + ATP = (R)-4'-phosphopantothenate + ADP + H(+). The protein operates within cofactor biosynthesis; coenzyme A biosynthesis; CoA from (R)-pantothenate: step 1/5. The protein is Pantothenate kinase of Coxiella burnetii (strain CbuK_Q154) (Coxiella burnetii (strain Q154)).